Reading from the N-terminus, the 119-residue chain is Large ribosomal subunit protein bL20 (119 aa).

This sequence belongs to the bacterial ribosomal protein bL20 family.

In terms of biological role, binds directly to 23S ribosomal RNA and is necessary for the in vitro assembly process of the 50S ribosomal subunit. It is not involved in the protein synthesizing functions of that subunit. The sequence is that of Large ribosomal subunit protein bL20 from Rhodospirillum centenum (strain ATCC 51521 / SW).